A 378-amino-acid chain; its full sequence is Probable endopolygalacturonase NFIA_008150 (378 aa).

The N-terminal stretch at 1–19 (MLKLIGSLVLLASAAEVIA) is a signal peptide. A propeptide spanning residues 20–35 (SPLAESVAPSITLEKR) is cleaved from the precursor. Cys-38 and Cys-56 are oxidised to a cystine. 3 PbH1 repeats span residues 147 to 169 (TSSS…SING), 170 to 200 (CDGL…DIGS), and 201 to 222 (SSNI…AVNS). The active-site Proton donor is the Asp-215. A disulfide bridge links Cys-217 with Cys-233. His-237 is an active-site residue. 2 PbH1 repeats span residues 247 to 273 (RSDN…RIKA) and 281 to 303 (IKGI…LIEQ). N-linked (GlcNAc...) asparagine glycosylation is present at Asn-254. N-linked (GlcNAc...) asparagine glycosylation is present at Asn-327. 2 disulfides stabilise this stretch: Cys-345/Cys-350 and Cys-369/Cys-378.

The protein belongs to the glycosyl hydrolase 28 family.

The protein localises to the secreted. The catalysed reaction is (1,4-alpha-D-galacturonosyl)n+m + H2O = (1,4-alpha-D-galacturonosyl)n + (1,4-alpha-D-galacturonosyl)m.. Its function is as follows. Involved in maceration and soft-rotting of plant tissue. Hydrolyzes the 1,4-alpha glycosidic bonds of de-esterified pectate in the smooth region of the plant cell wall. This is Probable endopolygalacturonase NFIA_008150 from Neosartorya fischeri (strain ATCC 1020 / DSM 3700 / CBS 544.65 / FGSC A1164 / JCM 1740 / NRRL 181 / WB 181) (Aspergillus fischerianus).